Reading from the N-terminus, the 92-residue chain is N(2)-fixation sustaining protein CowN (92 aa).

This sequence belongs to the CowN family.

Its function is as follows. Is required to sustain N(2)-dependent growth in the presence of low levels of carbon monoxide (CO). Probably acts by protecting the N(2) fixation ability of the nitrogenase complex, which is inactivated in the presence of CO. In Rhodopseudomonas palustris (strain BisB18), this protein is N(2)-fixation sustaining protein CowN.